The following is a 496-amino-acid chain: MASEKSHKVHPPLHFILFPFMAQGHMIPMIDIARLLAQRGATVTIVTTRYNAGRFENVLSRAMESGLPINIVHVNFPYQEFGLPEGKENIDSYDSMELMVPFFQAVNMLEDPVMKLMEEMKPRPSCIISDLLLPYTSKIARKFSIPKIVFHGTGCFNLLCMHVLRRNLEILKNLKSDKDYFLVPSFPDRVEFTKPQVPVETTASGDWKAFLDEMVEAEYTSYGVIVNTFQELEPAYVKDYTKARAGKVWSIGPVSLCNKAGADKAERGNQAAIDQDECLQWLDSKEDGSVLYVCLGSICNLPLSQLKELGLGLEKSQRSFIWVIRGWEKYNELYEWMMESGFEERIKERGLLIKGWSPQVLILSHPSVGGFLTHCGWNSTLEGITSGIPLITWPLFGDQFCNQKLVVQVLKAGVSAGVEEVMKWGEEEKIGVLVDKEGVKKAVEELMGASDDAKERRRRVKELGESAHKAVEEGGSSHSNITYLLQDIMQQVKSKN.

Residues serine 297, 357–359 (SPQ), 374–382 (HCGWNSTLE), and 396–399 (FGDQ) contribute to the UDP-alpha-D-glucose site. Positions 450–475 (SDDAKERRRRVKELGESAHKAVEEGG) are disordered. A compositionally biased stretch (basic and acidic residues) spans 451 to 472 (DDAKERRRRVKELGESAHKAVE).

This sequence belongs to the UDP-glycosyltransferase family.

The polypeptide is UDP-glycosyltransferase 73C4 (UGT73C4) (Arabidopsis thaliana (Mouse-ear cress)).